The following is a 120-amino-acid chain: MSESQSSGRSAEALALQHLSDSGLRLLERNWSCRSGELDLVMLDGDTVVFVEVRYRRHTAWGGALESVDVRKQQKLIKAAQLFLQAHGRWAKHPCRFDVVAITAPGQAKDLNWIRNAFES.

Belongs to the UPF0102 family.

The chain is UPF0102 protein PST_1070 from Stutzerimonas stutzeri (strain A1501) (Pseudomonas stutzeri).